The following is a 370-amino-acid chain: MQTAARRSFDYDMPLIQTPTSACQIRQAWAKVADTPDHETAGRLKDEIKVLLKRKNAVLVAHYYVDPLIQDLALETGGCVGDSLEMARFGAEHEAGTLVVAGVRFMGESAKILCPEKTVLMPDLEAECSLDLGCPEEAFSAFCDQHPDRTVAVYANTSAAVKARADWVVTSSVALEIVSYLKSRGEKLIWGPDRHLGDYIRRETGADMLLWQGSCIVHNEFKGQELAALKAEHPDAVVLVHPESPQSVIELGDVVGSTSKLLKAAVSRPEKKFIVATDLGILHEMQKQAPDKEFIAAPTAGNGGSCKSCAFCPWMAMNSLGGIKHALTGGRNEILLDRKLGEAAKLPLQRMLDFAAGLKRGDVFNGMGPA.

Iminosuccinate is bound by residues His62 and Ser83. Residue Cys128 participates in [4Fe-4S] cluster binding. Iminosuccinate is bound by residues 154–156 (YAN) and Ser171. Residue Cys215 participates in [4Fe-4S] cluster binding. Iminosuccinate is bound by residues 241-243 (HPE) and Thr258. Residue Cys312 participates in [4Fe-4S] cluster binding.

This sequence belongs to the quinolinate synthase family. Type 1 subfamily. [4Fe-4S] cluster serves as cofactor.

It localises to the cytoplasm. The enzyme catalyses iminosuccinate + dihydroxyacetone phosphate = quinolinate + phosphate + 2 H2O + H(+). The protein operates within cofactor biosynthesis; NAD(+) biosynthesis; quinolinate from iminoaspartate: step 1/1. In terms of biological role, catalyzes the condensation of iminoaspartate with dihydroxyacetone phosphate to form quinolinate. The polypeptide is Quinolinate synthase (Neisseria gonorrhoeae (strain ATCC 700825 / FA 1090)).